The following is a 141-amino-acid chain: Vasotocin-neurophysin VT (141 aa).

A disulfide bond links C1 and C6. A Glycine amide modification is found at G9. 7 disulfides stabilise this stretch: C22-C66, C25-C39, C33-C56, C40-C46, C73-C85, C79-C97, and C86-C91. N117 carries an N-linked (GlcNAc...) asparagine glycan.

It belongs to the vasopressin/oxytocin family. Post-translationally, seven disulfide bonds are present in neurophysin.

It is found in the secreted. In terms of biological role, vasotocin is an antidiuretic hormone. This is Vasotocin-neurophysin VT from Pelophylax lessonae (Pool frog).